The primary structure comprises 88 residues: Acyl carrier protein (88 aa).

Positions 4–79 (DSVPAKVMEI…AAVDYIQNKM (76 aa)) constitute a Carrier domain. O-(pantetheine 4'-phosphoryl)serine is present on serine 39.

This sequence belongs to the acyl carrier protein (ACP) family. In terms of processing, 4'-phosphopantetheine is transferred from CoA to a specific serine of apo-ACP by AcpS. This modification is essential for activity because fatty acids are bound in thioester linkage to the sulfhydryl of the prosthetic group.

It is found in the cytoplasm. It participates in lipid metabolism; fatty acid biosynthesis. Its function is as follows. Carrier of the growing fatty acid chain in fatty acid biosynthesis. This Trichodesmium erythraeum (strain IMS101) protein is Acyl carrier protein.